The primary structure comprises 439 residues: General transcription factor IIE subunit 1 (439 aa).

Position 2 is an N-acetylalanine (A2). The HTH TFE/IIEalpha-type domain maps to 14–104 (LKRLAKYVIR…NYRTLVNVVK (91 aa)). An N6-acetyllysine modification is found at K67. C129, C132, C154, and C157 together coordinate Zn(2+). Residues 129-157 (CPVCSSTFTDLEANQLFDPMTGTFRCTFC) form a C4-type zinc finger. Position 268 is a phosphoserine (S268). Low complexity predominate over residues 333 to 344 (SSAMAGSVGAAA). The interval 333–392 (SSAMAGSVGAAAPVTTANGSDSESETSESDDDSPPRPAAVAVHKREEDEEEDDEFEEVAD) is disordered. Composition is skewed to acidic residues over residues 354 to 364 (SESETSESDDD) and 379 to 392 (EDEEEDDEFEEVAD).

It belongs to the TFIIE alpha subunit family. Tetramer of two alpha and two beta chains. Interacts with TAF6/TAFII80. Interacts with ATF7IP. Interacts with SND1. Part of TBP-based Pol II pre-initiation complex (PIC), in which Pol II core assembles with general transcription factors and other specific initiation factors including GTF2E1, GTF2E2, GTF2F1, GTF2F2, TCEA1, ERCC2, ERCC3, GTF2H2, GTF2H3, GTF2H4, GTF2H5, GTF2A1, GTF2A2, GTF2B and TBP; this large multi-subunit PIC complex mediates DNA unwinding and targets Pol II core to the transcription start site where the first phosphodiester bond forms.

The protein localises to the nucleus. Its function is as follows. Recruits TFIIH to the initiation complex and stimulates the RNA polymerase II C-terminal domain kinase and DNA-dependent ATPase activities of TFIIH. Both TFIIH and TFIIE are required for promoter clearance by RNA polymerase. This Pongo abelii (Sumatran orangutan) protein is General transcription factor IIE subunit 1 (GTF2E1).